We begin with the raw amino-acid sequence, 254 residues long: GTP cyclohydrolase 1 type 2 homolog (254 aa).

Residues His68, His69, Asp106, His222, and Glu226 each contribute to the a divalent metal cation site.

It belongs to the GTP cyclohydrolase I type 2/NIF3 family. In terms of assembly, homohexamer.

The protein is GTP cyclohydrolase 1 type 2 homolog of Allochromatium vinosum (strain ATCC 17899 / DSM 180 / NBRC 103801 / NCIMB 10441 / D) (Chromatium vinosum).